Here is a 426-residue protein sequence, read N- to C-terminus: 3-phosphoshikimate 1-carboxyvinyltransferase (426 aa).

3 residues coordinate 3-phosphoshikimate: lysine 22, serine 23, and arginine 27. Lysine 22 is a phosphoenolpyruvate binding site. Glycine 96 and arginine 124 together coordinate phosphoenolpyruvate. Residues serine 170, serine 171, glutamine 172, serine 198, aspartate 314, asparagine 337, and lysine 341 each coordinate 3-phosphoshikimate. Residue glutamine 172 coordinates phosphoenolpyruvate. The active-site Proton acceptor is the aspartate 314. Residues arginine 345, arginine 387, and lysine 412 each contribute to the phosphoenolpyruvate site.

This sequence belongs to the EPSP synthase family. Monomer.

Its subcellular location is the cytoplasm. The catalysed reaction is 3-phosphoshikimate + phosphoenolpyruvate = 5-O-(1-carboxyvinyl)-3-phosphoshikimate + phosphate. It participates in metabolic intermediate biosynthesis; chorismate biosynthesis; chorismate from D-erythrose 4-phosphate and phosphoenolpyruvate: step 6/7. Catalyzes the transfer of the enolpyruvyl moiety of phosphoenolpyruvate (PEP) to the 5-hydroxyl of shikimate-3-phosphate (S3P) to produce enolpyruvyl shikimate-3-phosphate and inorganic phosphate. The sequence is that of 3-phosphoshikimate 1-carboxyvinyltransferase from Shewanella sp. (strain MR-7).